Here is a 141-residue protein sequence, read N- to C-terminus: ATP synthase F(0) complex subunit C2, mitochondrial (141 aa).

Residues 1–66 constitute a mitochondrion transit peptide; sequence MYACSKFVST…RSFQTSAISR (66 aa). Residues 82 to 102 traverse the membrane as a helical segment; the sequence is VGVAGSGAGIGTVFGSLIIGY. K109 carries the post-translational modification N6,N6,N6-trimethyllysine. A helical membrane pass occupies residues 117–137; that stretch reads ILGFALSEAMGLFCLMVAFLI.

It belongs to the ATPase C chain family. F-type ATPases have 2 components, CF(1) - the catalytic core - and CF(0) - the membrane proton channel. CF(1) has five subunits: alpha(3), beta(3), gamma(1), delta(1), epsilon(1). CF(0) has three main subunits: a, b and c. Interacts with DNAJC30; interaction is direct. Post-translationally, trimethylated by ATPSCKMT at Lys-109. Methylation is required for proper incorporation of the C subunit into the ATP synthase complex and mitochondrial respiration.

It localises to the mitochondrion membrane. Functionally, mitochondrial membrane ATP synthase (F(1)F(0) ATP synthase or Complex V) produces ATP from ADP in the presence of a proton gradient across the membrane which is generated by electron transport complexes of the respiratory chain. F-type ATPases consist of two structural domains, F(1) - containing the extramembraneous catalytic core and F(0) - containing the membrane proton channel, linked together by a central stalk and a peripheral stalk. During catalysis, ATP synthesis in the catalytic domain of F(1) is coupled via a rotary mechanism of the central stalk subunits to proton translocation. Part of the complex F(0) domain. A homomeric c-ring of probably 10 subunits is part of the complex rotary element. The protein is ATP synthase F(0) complex subunit C2, mitochondrial of Rattus norvegicus (Rat).